The sequence spans 361 residues: Histidine biosynthesis bifunctional protein HisB (361 aa).

The histidinol-phosphatase stretch occupies residues 1-172 (MTQPTLFIDR…PKTTACKRPP (172 aa)). Asp-9 serves as the catalytic Nucleophile. The Mg(2+) site is built by Asp-9 and Asp-11. Asp-11 serves as the catalytic Proton donor. The Zn(2+) site is built by Cys-92, His-94, Cys-100, and Cys-102. Residue Asp-129 coordinates Mg(2+). The imidazoleglycerol-phosphate dehydratase stretch occupies residues 173–361 (RYAEVVRTTK…NELPSSKGVL (189 aa)).

It in the N-terminal section; belongs to the histidinol-phosphatase family. The protein in the C-terminal section; belongs to the imidazoleglycerol-phosphate dehydratase family. Requires Mg(2+) as cofactor. It depends on Zn(2+) as a cofactor.

It is found in the cytoplasm. The enzyme catalyses D-erythro-1-(imidazol-4-yl)glycerol 3-phosphate = 3-(imidazol-4-yl)-2-oxopropyl phosphate + H2O. It carries out the reaction L-histidinol phosphate + H2O = L-histidinol + phosphate. It functions in the pathway amino-acid biosynthesis; L-histidine biosynthesis; L-histidine from 5-phospho-alpha-D-ribose 1-diphosphate: step 6/9. The protein operates within amino-acid biosynthesis; L-histidine biosynthesis; L-histidine from 5-phospho-alpha-D-ribose 1-diphosphate: step 8/9. This is Histidine biosynthesis bifunctional protein HisB from Actinobacillus pleuropneumoniae serotype 3 (strain JL03).